Reading from the N-terminus, the 503-residue chain is Maturase K (503 aa).

The protein belongs to the intron maturase 2 family. MatK subfamily.

It is found in the plastid. The protein localises to the chloroplast. Usually encoded in the trnK tRNA gene intron. Probably assists in splicing its own and other chloroplast group II introns. The polypeptide is Maturase K (Backhousia subargentea (Giant ironwood)).